The sequence spans 73 residues: Large ribosomal subunit protein bL31 (73 aa).

C16, C18, C37, and C40 together coordinate Zn(2+).

It belongs to the bacterial ribosomal protein bL31 family. Type A subfamily. Part of the 50S ribosomal subunit. It depends on Zn(2+) as a cofactor.

Functionally, binds the 23S rRNA. The polypeptide is Large ribosomal subunit protein bL31 (Hamiltonella defensa subsp. Acyrthosiphon pisum (strain 5AT)).